The chain runs to 539 residues: Probable malate:quinone oxidoreductase (539 aa).

The protein belongs to the MQO family. FAD serves as cofactor.

It catalyses the reaction (S)-malate + a quinone = a quinol + oxaloacetate. It participates in carbohydrate metabolism; tricarboxylic acid cycle; oxaloacetate from (S)-malate (quinone route): step 1/1. The sequence is that of Probable malate:quinone oxidoreductase from Sodalis glossinidius (strain morsitans).